Here is a 121-residue protein sequence, read N- to C-terminus: Small ribosomal subunit protein uS13 (121 aa).

The disordered stretch occupies residues 93–121 (RGLPMRGQRTRTNARTRKGPRKAAQSLKK).

This sequence belongs to the universal ribosomal protein uS13 family. As to quaternary structure, part of the 30S ribosomal subunit. Forms a loose heterodimer with protein S19. Forms two bridges to the 50S subunit in the 70S ribosome.

Functionally, located at the top of the head of the 30S subunit, it contacts several helices of the 16S rRNA. In the 70S ribosome it contacts the 23S rRNA (bridge B1a) and protein L5 of the 50S subunit (bridge B1b), connecting the 2 subunits; these bridges are implicated in subunit movement. Contacts the tRNAs in the A and P-sites. This is Small ribosomal subunit protein uS13 from Albidiferax ferrireducens (strain ATCC BAA-621 / DSM 15236 / T118) (Rhodoferax ferrireducens).